We begin with the raw amino-acid sequence, 85 residues long: Large ribosomal subunit protein uL29 (85 aa).

Belongs to the universal ribosomal protein uL29 family.

The chain is Large ribosomal subunit protein uL29 from Thermobifida fusca (strain YX).